The chain runs to 232 residues: Ubiquitin carboxyl-terminal hydrolase UCHL3 (232 aa).

Residues 6 to 225 (IWTPLESNPD…LRFSALAVIP (220 aa)) form the UCH catalytic domain. The interaction with ubiquitin stretch occupies residues 10 to 14 (LESNP). The active-site Nucleophile is C92. The segment at 151-159 (QVENRDDIL) is crossover loop which restricts access of large ubiquitin adducts to the active site. Positions 163-165 (THF) are interaction with ubiquitin. The Proton donor role is filled by H164.

Belongs to the peptidase C12 family.

It catalyses the reaction Thiol-dependent hydrolysis of ester, thioester, amide, peptide and isopeptide bonds formed by the C-terminal Gly of ubiquitin (a 76-residue protein attached to proteins as an intracellular targeting signal).. In terms of biological role, thiol protease that recognizes and hydrolyzes a peptide bond at the C-terminal glycine of either ubiquitin or NEDD8. Essential for parasite blood stage survival. In Plasmodium falciparum (isolate 3D7), this protein is Ubiquitin carboxyl-terminal hydrolase UCHL3.